A 333-amino-acid chain; its full sequence is Tryptophan--tRNA ligase (333 aa).

ATP is bound by residues 11-13 (QPS) and 19-20 (GN). A 'HIGH' region motif is present at residues 12–20 (PSGELTIGN). D135 serves as a coordination point for L-tryptophan. Residues 147–149 (GED), V186, and 195–199 (KMSKS) contribute to the ATP site. Positions 195-199 (KMSKS) match the 'KMSKS' region motif.

It belongs to the class-I aminoacyl-tRNA synthetase family. Homodimer.

The protein resides in the cytoplasm. It carries out the reaction tRNA(Trp) + L-tryptophan + ATP = L-tryptophyl-tRNA(Trp) + AMP + diphosphate + H(+). Its function is as follows. Catalyzes the attachment of tryptophan to tRNA(Trp). This chain is Tryptophan--tRNA ligase, found in Pasteurella multocida (strain Pm70).